Here is a 381-residue protein sequence, read N- to C-terminus: RxLR effector protein 54 (381 aa).

Residues 1–19 form the signal peptide; the sequence is MRFQSIMMLTITCAGTCLA. Positions 57–75 match the RxLR-dEER motif; sequence RFLRFDTVARDTAGNDEER. 5 WY-domain regions span residues 97–150, 151–198, 199–247, 251–299, and 302–354; these read SAEE…ANNG, NQAF…SLSG, NWIR…WNKN, FFGD…LLTS, and SHKT…RDKI. An ATG8 interacting motif motif is present at residues 372–381; that stretch reads KPLDFDWEIV.

This sequence belongs to the RxLR effector family. As to quaternary structure, interacts via its C-terminal AIM with host ATG8CL.

The protein localises to the secreted. It is found in the host nucleus. The protein resides in the host cytoplasm. In terms of biological role, effector that specifically binds host autophagy protein ATG8CL of the ATG8 family to stimulate autophagosome formation and subsequent autophagy rather than blocking autophagic flux. The pathogen remodels host-microbe interface by co-opting the host autophagy machinery which plays a key role in plant immunity. PexRD54 competes with the autophagy cargo receptor Joka2 to deplete it out of ATG8CL complexes and interferes with Joka2's positive effect on pathogen defense. This Phytophthora infestans (strain T30-4) (Potato late blight agent) protein is RxLR effector protein 54.